Consider the following 356-residue polypeptide: Probable protein phosphatase 2C T23F11.1 (356 aa).

The region spanning 23–286 is the PPM-type phosphatase domain; sequence LVGSSCMQGW…DNMTVVLVGL (264 aa). The Mn(2+) site is built by Asp-59, Gly-60, Asp-228, and Asp-277. The tract at residues 336 to 356 is disordered; the sequence is NAANQEEEEDDNEPAPANFQV.

The protein belongs to the PP2C family. Mg(2+) is required as a cofactor. Requires Mn(2+) as cofactor.

The enzyme catalyses O-phospho-L-seryl-[protein] + H2O = L-seryl-[protein] + phosphate. It catalyses the reaction O-phospho-L-threonyl-[protein] + H2O = L-threonyl-[protein] + phosphate. This chain is Probable protein phosphatase 2C T23F11.1 (ppm-2), found in Caenorhabditis elegans.